The following is a 268-amino-acid chain: Hemin import ATP-binding protein HmuV (268 aa).

In terms of domain architecture, ABC transporter spans 5 to 242 (IEARHLSKRA…ETIRDIFEID (238 aa)). Position 37–44 (37–44 (GPNGAGKS)) interacts with ATP.

It belongs to the ABC transporter superfamily. Heme (hemin) importer (TC 3.A.1.14.5) family. As to quaternary structure, the complex is composed of two ATP-binding proteins (HmuV), two transmembrane proteins (HmuU) and a solute-binding protein (HmuT).

Its subcellular location is the cell inner membrane. Part of the ABC transporter complex HmuTUV involved in hemin import. Responsible for energy coupling to the transport system. This Bradyrhizobium diazoefficiens (strain JCM 10833 / BCRC 13528 / IAM 13628 / NBRC 14792 / USDA 110) protein is Hemin import ATP-binding protein HmuV.